The chain runs to 319 residues: Vomeronasal type-1 receptor 51 (319 aa).

Over 1 to 31 (MNEILFFSPQPLFSHMMNENSRVHTHSNLRH) the chain is Extracellular. A helical membrane pass occupies residues 32–52 (IFFSEIGIGISGNSFLLLFHI). The Cytoplasmic portion of the chain corresponds to 53-65 (LKFIHGHRSRLSD). The helical transmembrane segment at 66 to 86 (LPIGLLSLIHLLMLLVMAFIA) threads the bilayer. Topologically, residues 87 to 109 (TDIFISWRGWDDIICKFLVYLYR) are extracellular. Cysteines 101 and 188 form a disulfide. A helical membrane pass occupies residues 110–130 (VLRGLSLCTTSMLSVLQAIIL). Over 131–150 (SPRSSCLAKFKRKSLHHISC) the chain is Cytoplasmic. The helical transmembrane segment at 151–171 (AILFLSVLYMLIGSQLLVSII) threads the bilayer. The Extracellular segment spans residues 172 to 203 (ATPNLTTNDFIYVTQSCSILPLSYVMQSMFST). N-linked (GlcNAc...) asparagine glycosylation occurs at Asn-175. The chain crosses the membrane as a helical span at residues 204–224 (LLVIRDVFLISLMVLSTWYMV). Residues 225–254 (ALLCRHRKKTQHLQGISLSPKTSPKQRATQ) lie on the Cytoplasmic side of the membrane. The helical transmembrane segment at 255–275 (TLLMLMSFFVLMTIYDTIVSC) threads the bilayer. Residues 276-285 (SRTMFLNDPT) are Extracellular-facing. The helical transmembrane segment at 286 to 306 (SYNMQIFVVHIYATVSPFVFM) threads the bilayer. At 307–319 (STEKHIVNCLRSV) the chain is on the cytoplasmic side.

The protein belongs to the G-protein coupled receptor 1 family. As to expression, expressed in a subset of sensory neurons located in the apical layer of the vomeronasal organ.

It localises to the cell membrane. In terms of biological role, putative pheromone receptor implicated in the regulation of social as well as reproductive behavior. This is Vomeronasal type-1 receptor 51 (Vmn1r51) from Mus musculus (Mouse).